The primary structure comprises 201 residues: ATP synthase subunit b 2 (201 aa).

Residues 1–17 (MAEQKNPLTTPSPNADT) show a composition bias toward polar residues. The disordered stretch occupies residues 1-39 (MAEQKNPLTTPSPNADTTIVPAGSPHTHTEQPSGGHGGA). Residues 47–66 (TFLSQLIWLALAFGLLYYLM) form a helical membrane-spanning segment.

This sequence belongs to the ATPase B chain family. As to quaternary structure, F-type ATPases have 2 components, F(1) - the catalytic core - and F(0) - the membrane proton channel. F(1) has five subunits: alpha(3), beta(3), gamma(1), delta(1), epsilon(1). F(0) has three main subunits: a(1), b(2) and c(10-14). The alpha and beta chains form an alternating ring which encloses part of the gamma chain. F(1) is attached to F(0) by a central stalk formed by the gamma and epsilon chains, while a peripheral stalk is formed by the delta and b chains.

It is found in the cell inner membrane. Its function is as follows. F(1)F(0) ATP synthase produces ATP from ADP in the presence of a proton or sodium gradient. F-type ATPases consist of two structural domains, F(1) containing the extramembraneous catalytic core and F(0) containing the membrane proton channel, linked together by a central stalk and a peripheral stalk. During catalysis, ATP synthesis in the catalytic domain of F(1) is coupled via a rotary mechanism of the central stalk subunits to proton translocation. Functionally, component of the F(0) channel, it forms part of the peripheral stalk, linking F(1) to F(0). The b'-subunit is a diverged and duplicated form of b found in plants and photosynthetic bacteria. The protein is ATP synthase subunit b 2 (atpF2) of Methylorubrum extorquens (strain PA1) (Methylobacterium extorquens).